The primary structure comprises 88 residues: UPF0297 protein str1959 (88 aa).

Belongs to the UPF0297 family.

The protein is UPF0297 protein str1959 of Streptococcus thermophilus (strain CNRZ 1066).